The chain runs to 332 residues: Glycerol-3-phosphate dehydrogenase [NAD(P)+] (332 aa).

Residues Ser10, Trp11, His31, Arg32, and Lys105 each contribute to the NADPH site. The sn-glycerol 3-phosphate site is built by Lys105, Gly136, and Ser138. Ala140 serves as a coordination point for NADPH. Sn-glycerol 3-phosphate is bound by residues Lys191, Asp244, Ser254, Arg255, and Asn256. Lys191 acts as the Proton acceptor in catalysis. Position 255 (Arg255) interacts with NADPH. Residues Val279 and Glu281 each contribute to the NADPH site.

The protein belongs to the NAD-dependent glycerol-3-phosphate dehydrogenase family.

Its subcellular location is the cytoplasm. It catalyses the reaction sn-glycerol 3-phosphate + NAD(+) = dihydroxyacetone phosphate + NADH + H(+). It carries out the reaction sn-glycerol 3-phosphate + NADP(+) = dihydroxyacetone phosphate + NADPH + H(+). Its pathway is membrane lipid metabolism; glycerophospholipid metabolism. In terms of biological role, catalyzes the reduction of the glycolytic intermediate dihydroxyacetone phosphate (DHAP) to sn-glycerol 3-phosphate (G3P), the key precursor for phospholipid synthesis. In Prosthecochloris aestuarii (strain DSM 271 / SK 413), this protein is Glycerol-3-phosphate dehydrogenase [NAD(P)+].